The sequence spans 301 residues: Transcription elongation factor A protein 1 (301 aa).

An N-acetylmethionine modification is found at Met-1. The region spanning 3–80 (DEVIRIAKKM…KSWKKLLDGP (78 aa)) is the TFIIS N-terminal domain. Lys-55 is covalently cross-linked (Glycyl lysine isopeptide (Lys-Gly) (interchain with G-Cter in ubiquitin)). 4 positions are modified to phosphoserine: Ser-57, Ser-81, Ser-97, and Ser-100. Over residues 76 to 93 (LLDGPSTDKDSEEKKKDT) the composition is skewed to basic and acidic residues. The disordered stretch occupies residues 76 to 139 (LLDGPSTDKD…FPRAPSTSDS (64 aa)). In terms of domain architecture, TFIIS central spans 140 to 256 (VRLKCREMLA…EHQMAKTGGT (117 aa)). A TFIIS-type zinc finger spans residues 259–299 (DLFTCGKCKKKNCTYTQVQTRSADEPMTTFVVCNECGNRWK). Zn(2+) contacts are provided by Cys-263, Cys-266, Cys-291, and Cys-294.

This sequence belongs to the TFS-II family. In terms of assembly, interacts with EAF2. Associates with UBR5 and forms a transcription regulatory complex made of CDK9, Pol II, UBR5 and TCEA1/TFIIS. Part of TBP-based Pol II pre-initiation complex (PIC), in which Pol II core assembles with general transcription factors and other specific initiation factors including GTF2E1, GTF2E2, GTF2F1, GTF2F2, TCEA1, ERCC2, ERCC3, GTF2H2, GTF2H3, GTF2H4, GTF2H5, GTF2A1, GTF2A2, GTF2B and TBP; this large multi-subunit PIC complex mediates DNA unwinding and targets Pol II core to the transcription start site where the first phosphodiester bond forms.

It is found in the nucleus. Its function is as follows. Necessary for efficient RNA polymerase II transcription elongation past template-encoded arresting sites. The arresting sites in DNA have the property of trapping a certain fraction of elongating RNA polymerases that pass through, resulting in locked ternary complexes. Cleavage of the nascent transcript by S-II allows the resumption of elongation from the new 3'-terminus. This is Transcription elongation factor A protein 1 (TCEA1) from Bos taurus (Bovine).